Here is a 432-residue protein sequence, read N- to C-terminus: D-amino acid dehydrogenase (432 aa).

FAD is bound at residue 3 to 17 (VVILGSGVVGVASAW).

This sequence belongs to the DadA oxidoreductase family. Requires FAD as cofactor.

It catalyses the reaction a D-alpha-amino acid + A + H2O = a 2-oxocarboxylate + AH2 + NH4(+). The protein operates within amino-acid degradation; D-alanine degradation; NH(3) and pyruvate from D-alanine: step 1/1. Its function is as follows. Oxidative deamination of D-amino acids. This chain is D-amino acid dehydrogenase, found in Shigella boydii serotype 18 (strain CDC 3083-94 / BS512).